Reading from the N-terminus, the 126-residue chain is C2H2-type zinc-finger transcription factor M5 (126 aa).

Disordered regions lie at residues 17-52 and 103-126; these read AQPD…NDNR and EKKS…RVKD. The segment covering 38–48 has biased composition (polar residues); sequence SNGSSSGTATD. The C2H2-type 1; degenerate zinc finger occupies 51–76; that stretch reads NRCWDHGCNGKKFLNHSNLVRHRREN. The C2H2-type 2; degenerate zinc-finger motif lies at 83–115; that stretch reads FTCPMCGAYFSRSTARNQHLEKKSCNRVRRYSN. The span at 115-126 shows a compositional bias: basic and acidic residues; it reads NGRERPRPRVKD.

This sequence belongs to the GLI C2H2-type zinc-finger protein family.

The protein resides in the nucleus. Transcription factor that probably regulates the expression of the gene cluster that mediates the biosynthesis of squalestatin S1 (SQS1, also known as zaragozic acid A), a heavily oxidized fungal polyketide that offers potent cholesterol lowering activity by targeting squalene synthase (SS). The sequence is that of C2H2-type zinc-finger transcription factor M5 from Phoma sp. (strain ATCC 20986 / MF5453).